Consider the following 93-residue polypeptide: Transcription factor PRE3 (93 aa).

Residues 6–61 form the bHLH domain; the sequence is SRSRQSSGTSRISEDQINDLIIKLQQLLPELRDSRRSDKVSAARVLQDTCNYIRNL.

In terms of assembly, homodimer. Interacts with BHLH 147, BHLH148, BHLH149, BHLH150 and IBH1. Interacts with SIEL. As to expression, expressed in root and shoot meristems, and young siliques. Low levels detected in all aerial tissues.

It is found in the nucleus. The protein localises to the cytoplasm. Its function is as follows. Atypical and probable non DNA-binding bHLH transcription factor required for MONOPTEROS-dependent root initiation in embryo. Promotes the correct definition of the hypophysis cell division plane. Transcriptionally controlled by MONOPTEROS. Moves from its site of synthesis in pro-embryos cells into the hypophysis. Regulates brassinosteroid (BR) signaling by sequestering negative BR signaling components. May function as positive regulator of gibberellin signaling. May play a role in the regulation of light signaling and possibly auxin signaling. The sequence is that of Transcription factor PRE3 (PRE3) from Arabidopsis thaliana (Mouse-ear cress).